The primary structure comprises 78 residues: Translation initiation factor IF-1, chloroplastic (78 aa).

An S1-like domain is found at 1–72 (MKKQNLIDME…TKGRITYRLR (72 aa)).

This sequence belongs to the IF-1 family. Component of the 30S ribosomal translation pre-initiation complex which assembles on the 30S ribosome in the order IF-2 and IF-3, IF-1 and N-formylmethionyl-tRNA(fMet); mRNA recruitment can occur at any time during PIC assembly.

It localises to the plastid. It is found in the chloroplast. One of the essential components for the initiation of protein synthesis. Stabilizes the binding of IF-2 and IF-3 on the 30S subunit to which N-formylmethionyl-tRNA(fMet) subsequently binds. Helps modulate mRNA selection, yielding the 30S pre-initiation complex (PIC). Upon addition of the 50S ribosomal subunit IF-1, IF-2 and IF-3 are released leaving the mature 70S translation initiation complex. The sequence is that of Translation initiation factor IF-1, chloroplastic from Physcomitrium patens (Spreading-leaved earth moss).